The sequence spans 590 residues: uncharacterized protein (590 aa).

The Cytoplasmic portion of the chain corresponds to 1-68 (MKFSKPKFSM…SQRVWGPWNY (68 aa)). Residues 69–89 (VAFWLADSVNVNTWMIAGTAV) form a helical membrane-spanning segment. The Extracellular portion of the chain corresponds to 90 to 94 (ESGLS). A helical transmembrane segment spans residues 95-115 (WWEAWITVWVGYTIAAFILTI). Over 116-124 (AGRAGAVYH) the chain is Cytoplasmic. A helical membrane pass occupies residues 125–145 (ISFPVLSRSSFGIWGSLWPIL). Over 146–149 (NRAV) the chain is Extracellular. Residues 150 to 170 (MACVWYGVQAWIGGECVTLMI) form a helical membrane-spanning segment. The Cytoplasmic portion of the chain corresponds to 171 to 194 (RSIWPSFSHIPNTMAKSGTETYQW). Residues 195 to 215 (VGFFIFWLISNVAIWFPVYQI) form a helical membrane-spanning segment. Residues 216–218 (RHL) are Extracellular-facing. A helical membrane pass occupies residues 219-239 (FTAKSFLAPPAAIAFLIWALV). Over 240–258 (KAHGAGDAIHAKTQLSTWN) the chain is Cytoplasmic. A helical transmembrane segment spans residues 259-279 (HGWAVTAGIISCLDNFATLIV). Residues 280–298 (NNPDFTRFATTPNAPIFPQ) are Extracellular-facing. A helical membrane pass occupies residues 299-319 (LITIPMGFGITTLIGVLVGSA). Residues 320-390 (SKSIYGENIW…LCPMFINIRR (71 aa)) lie on the Cytoplasmic side of the membrane. A helical membrane pass occupies residues 391-411 (GGYIASIIGICMCPWNLLSSS). The Extracellular segment spans residues 412–418 (NSFANSL). A helical transmembrane segment spans residues 419-439 (SAYAVFLSSFAGILIADYFVI). The Cytoplasmic portion of the chain corresponds to 440–467 (RKGYLKVDALYTINPNEPYWFTYGINLR). Residues 468–488 (AFASYICGLLINVVGLAGAVG) form a helical membrane-spanning segment. The Extracellular segment spans residues 489–500 (DKVPKAALTMNN). The chain crosses the membrane as a helical span at residues 501–521 (IAYLLGIVTSFLSHLIICKIF). At 522–590 (PVTACGEKFL…GIDIKESSVF (69 aa)) the chain is on the cytoplasmic side. The segment at 566–590 (VSYDSKEKSDDGKSGGIDIKESSVF) is disordered.

It belongs to the purine-cytosine permease (2.A.39) family.

It localises to the cytoplasm. It is found in the nucleus. Its subcellular location is the membrane. This is an uncharacterized protein from Schizosaccharomyces pombe (strain 972 / ATCC 24843) (Fission yeast).